Consider the following 231-residue polypeptide: Dephospho-CoA kinase domain-containing protein (231 aa).

Positions 3–207 constitute a DPCK domain; the sequence is LVGLTGGIAS…RSMEYLPLRL (205 aa). Position 8-15 (8-15) interacts with ATP; sequence GGIASGKS.

It belongs to the CoaE family.

The polypeptide is Dephospho-CoA kinase domain-containing protein (Dcakd) (Mus musculus (Mouse)).